Consider the following 425-residue polypeptide: MGSLSSPTDLTPYQVLSKYKKFPSPDEEFWWDHAASTLADLIKWTKATPAQEYEFLQFFYEHVIPNFSGYRPYDVPGRAWNTGITPSGLPLEYSVNWRNIDANAMVRVGVEPISQFAGTARDPYSHYKIWDTLNQLSQVKALKSFDLELWRHFSSALCTSREEEALLDQTRTLPESFSIAKMQHSMGFDFCDDEVVVKIYLIPNMKARASGTPLAELLTGSIHAIYRDTIDRETLATVINYLDSTSNFNDATWFSFDCIPRSQSRIKLYGSDFRTTWSRAEDLWTVGGRYTDAVTMKGLAYLKELWDLLPIQDFETLPEQAVQNPPMLWAYEIRPGDKIPSPRIYIPGHCLNDKKVADGLSAFFKRVGWSDLGDQYTDRLFSMFPKQDLKDSTALHTWIAFSYTEKSGVYMNCYYLASASFPFKL.

L-tryptophan-binding positions include 83 to 84 (GI) and Glu92. Residues Arg107, Lys198, Tyr200, Arg265, Lys267, Tyr269, Tyr345, Tyr410, and Tyr414 each coordinate substrate.

It belongs to the tryptophan dimethylallyltransferase family. As to quaternary structure, homodimer.

Its pathway is secondary metabolite biosynthesis. In terms of biological role, aromatic prenyl transferase; part of the gene cluster that mediates the biosynthesis of the indole diterpenes penitrems. The geranylgeranyl diphosphate (GGPP) synthase ptmG catalyzes the first step in penitrem biosynthesis via conversion of farnesyl pyrophosphate and isopentyl pyrophosphate into geranylgeranyl pyrophosphate (GGPP). Condensation of indole-3-glycerol phosphate with GGPP by the prenyl transferase ptmC then forms 3-geranylgeranylindole (3-GGI). Epoxidation by the FAD-dependent monooxygenase ptmM leads to a epoxidized-GGI that is substrate of the terpene cyclase ptmB for cyclization to yield paspaline. Paspaline is subsequently converted to 13-desoxypaxilline by the cytochrome P450 monooxygenase ptmP, the latter being then converted to paxilline by the cytochrome P450 monooxygenase ptmQ. Paxilline is converted to beta-paxitriol via C-10 ketoreduction by the short-chain dehydrogenase ptmH which can be monoprenylated at the C-20 by the indole diterpene prenyltransferase ptmD. A two-step elimination (acetylation and elimination) process performed by the O-acetyltransferase ptmV and ptmI leads to the production of the prenylated form of penijanthine. The FAD-linked oxidoreductase ptmO then converts the prenylated form of penijanthine into PC-M5 which is in turn transformed into PC-M4 by the aromatic dimethylallyltransferase ptmE. Five sequential oxidative transformations performed by the cytochrome P450 monooxygenases ptmK, ptmU, ptmL, ptmN and ptmJ yield the various penitrem compounds. PtmK, ptmU and ptmM are involved in the formation of the key bicyclic ring of penitrem C via the formation of the intermediates secopenitrem D and penitrem D. PtmL catalyzes the epoxidation of penitrem D and C to yield penitrem B and F, respectively. PtmJ catalyzes the last benzylic hydroxylation to convert penitrem B to prenitrem E and penitrem F to penitrem A. In Penicillium ochrochloron, this protein is Aromatic prenyl transferase ptmE.